An 82-amino-acid chain; its full sequence is RNA-binding protein Hfq (82 aa).

The region spanning 11–71 is the Sm domain; sequence DTFLNHVRKT…ISTIMPGAPI (61 aa).

It belongs to the Hfq family. As to quaternary structure, homohexamer.

In terms of biological role, RNA chaperone that binds small regulatory RNA (sRNAs) and mRNAs to facilitate mRNA translational regulation in response to envelope stress, environmental stress and changes in metabolite concentrations. Also binds with high specificity to tRNAs. The chain is RNA-binding protein Hfq from Rhodopseudomonas palustris (strain TIE-1).